A 57-amino-acid chain; its full sequence is UPF0391 membrane protein bsl6560 (57 aa).

2 consecutive transmembrane segments (helical) span residues 4–24 (WVVTFLVIALIAGILGFGGIA) and 30–50 (IAKIIFFIAVVLFLVSAVVGL).

This sequence belongs to the UPF0391 family.

The protein localises to the cell membrane. This chain is UPF0391 membrane protein bsl6560, found in Bradyrhizobium diazoefficiens (strain JCM 10833 / BCRC 13528 / IAM 13628 / NBRC 14792 / USDA 110).